We begin with the raw amino-acid sequence, 202 residues long: Venom allergen 5.02 (202 aa).

Disulfide bonds link Cys-4–Cys-16, Cys-8–Cys-101, Cys-26–Cys-94, and Cys-168–Cys-185. The SCP domain occupies 46–187 (KQHNEFRQKV…WHRHYLVCNY (142 aa)).

Belongs to the CRISP family. Venom allergen 5-like subfamily. Expressed by the venom gland.

The protein resides in the secreted. In Vespa crabro (European hornet), this protein is Venom allergen 5.02.